The primary structure comprises 226 residues: Ribonuclease HII (226 aa).

The 192-residue stretch at 29-220 folds into the RNase H type-2 domain; that stretch reads GPVAGVDEAG…VAALLHRVDN (192 aa). Positions 35, 36, and 129 each coordinate a divalent metal cation.

Belongs to the RNase HII family. Mn(2+) serves as cofactor. It depends on Mg(2+) as a cofactor.

Its subcellular location is the cytoplasm. The enzyme catalyses Endonucleolytic cleavage to 5'-phosphomonoester.. In terms of biological role, endonuclease that specifically degrades the RNA of RNA-DNA hybrids. This chain is Ribonuclease HII, found in Rhodococcus opacus (strain B4).